The chain runs to 338 residues: 1-aminocyclopropane-1-carboxylate deaminase (338 aa).

At lysine 51 the chain carries N6-(pyridoxal phosphate)lysine. Serine 78 acts as the Nucleophile in catalysis.

Belongs to the ACC deaminase/D-cysteine desulfhydrase family. In terms of assembly, homotrimer. Pyridoxal 5'-phosphate serves as cofactor.

The catalysed reaction is 1-aminocyclopropane-1-carboxylate + H2O = 2-oxobutanoate + NH4(+). Functionally, catalyzes a cyclopropane ring-opening reaction, the irreversible conversion of 1-aminocyclopropane-1-carboxylate (ACC) to ammonia and alpha-ketobutyrate. Allows growth on ACC as a nitrogen source. The sequence is that of 1-aminocyclopropane-1-carboxylate deaminase from Methylibium petroleiphilum (strain ATCC BAA-1232 / LMG 22953 / PM1).